Consider the following 362-residue polypeptide: Type II methyltransferase M.MamI (362 aa).

This sequence belongs to the N(4)/N(6)-methyltransferase family.

It catalyses the reaction a 2'-deoxyadenosine in DNA + S-adenosyl-L-methionine = an N(6)-methyl-2'-deoxyadenosine in DNA + S-adenosyl-L-homocysteine + H(+). A gamma subtype methylase that recognizes the double-stranded sequence 5'-GATNNNNATC-3', methylates A-? on both strands, and protects the DNA from cleavage by the MamI endonuclease. The sequence is that of Type II methyltransferase M.MamI from Microbacterium ammoniaphilum.